We begin with the raw amino-acid sequence, 174 residues long: Gamma-crystallin C (174 aa).

2 Beta/gamma crystallin 'Greek key' domains span residues 2 to 40 and 41 to 83; these read GKIT…RVES and GCWM…CLIP. Cys-23 carries the S-methylcysteine modification. Residues 84–87 form a connecting peptide region; the sequence is QTGS. Beta/gamma crystallin 'Greek key' domains lie at 88-128 and 129-171; these read HRLR…HVLE and GCWV…RRVV.

This sequence belongs to the beta/gamma-crystallin family. In terms of assembly, monomer.

Its function is as follows. Crystallins are the dominant structural components of the vertebrate eye lens. The protein is Gamma-crystallin C (CRYGC) of Macaca mulatta (Rhesus macaque).